The chain runs to 305 residues: tRNA dimethylallyltransferase (305 aa).

Residue 13-20 (GPTSSGKT) participates in ATP binding. 15-20 (TSSGKT) contributes to the substrate binding site. Positions 39 to 42 (DSKQ) are interaction with substrate tRNA.

The protein belongs to the IPP transferase family. Monomer. Mg(2+) serves as cofactor.

It carries out the reaction adenosine(37) in tRNA + dimethylallyl diphosphate = N(6)-dimethylallyladenosine(37) in tRNA + diphosphate. Catalyzes the transfer of a dimethylallyl group onto the adenine at position 37 in tRNAs that read codons beginning with uridine, leading to the formation of N6-(dimethylallyl)adenosine (i(6)A). The polypeptide is tRNA dimethylallyltransferase (Neorickettsia sennetsu (strain ATCC VR-367 / Miyayama) (Ehrlichia sennetsu)).